Consider the following 257-residue polypeptide: Ig delta chain C region secreted form (257 aa).

The Ig-like 1 domain occupies 5 to 105 (PDMFLLSECK…WDSQSSKRVT (101 aa)). Cys-26 and Cys-78 are oxidised to a cystine. 2 N-linked (GlcNAc...) asparagine glycosylation sites follow: Asn-58 and Asn-75. The segment at 89–111 (PFKFPESWDSQSSKRVTPTLQAK) is disordered. Residues 96–111 (WDSQSSKRVTPTLQAK) are compositionally biased toward polar residues. N-linked (GlcNAc...) asparagine glycans are attached at residues Asn-112, Asn-135, and Asn-227. In terms of domain architecture, Ig-like 2 spans 133-233 (PSNLTVNILT…TKLNASKSLA (101 aa)).

In terms of tissue distribution, cell lines producing IgD contain several mRNA species for Ig delta chains. In plasmacytomas, the secreted form is the major component, and the membrane-bound form is a minor component. In spleen, however, the membrane-bound form is the major component. These two forms differ in their C-terminal segments.

It localises to the secreted. This chain is Ig delta chain C region secreted form, found in Mus musculus (Mouse).